Reading from the N-terminus, the 315-residue chain is Secreted frizzled-related protein 5 (315 aa).

Residues 1–27 form the signal peptide; that stretch reads MRAAAGGARAAVLALLLGALHGAPARG. The region spanning 46 to 163 is the FZ domain; it reads SKPPQCLDIP…PLDNDLCIAV (118 aa). Intrachain disulfides connect C51-C114, C61-C107, C98-C133, C122-C160, C126-C150, C179-C251, C182-C253, and C196-C301. The 123-residue stretch at 179–301 folds into the NTR domain; sequence CAQCEMEHSA…AVKFMFSYPC (123 aa).

This sequence belongs to the secreted frizzled-related protein (sFRP) family. As to expression, strongly expressed in the retinal pigment epithelium (RPE). Weak expression in retina, brain, heart, liver, kidney, testis and muscle.

The protein localises to the secreted. Soluble frizzled-related proteins (sFRPS) function as modulators of Wnt signaling through direct interaction with Wnts. They have a role in regulating cell growth and differentiation in specific cell types. SFRP5 may be involved in determining the polarity of photoreceptor, and perhaps other, cells in the retina. Inhibits Wnt8 signaling, in vitro. The polypeptide is Secreted frizzled-related protein 5 (SFRP5) (Bos taurus (Bovine)).